Reading from the N-terminus, the 185-residue chain is Putative manganese efflux pump MntP (185 aa).

The next 6 membrane-spanning stretches (helical) occupy residues 4-24 (LFIG…TDAF), 40-60 (IFHI…AGMA), 64-84 (LLSG…LFIL), 108-128 (LLLF…SLGM), 134-154 (FLAV…GLLA), and 165-185 (YSEA…LLPV).

Belongs to the MntP (TC 9.B.29) family.

The protein resides in the cell membrane. Functionally, probably functions as a manganese efflux pump. The chain is Putative manganese efflux pump MntP from Bacillus velezensis (strain DSM 23117 / BGSC 10A6 / LMG 26770 / FZB42) (Bacillus amyloliquefaciens subsp. plantarum).